Reading from the N-terminus, the 117-residue chain is Putative membrane protein insertion efficiency factor (117 aa).

Residues 87-117 (RKGGPSAAEPAIEGHIPSSPAAETPSHVQGA) are disordered.

This sequence belongs to the UPF0161 family.

Its subcellular location is the cell membrane. Its function is as follows. Could be involved in insertion of integral membrane proteins into the membrane. In Streptomyces avermitilis (strain ATCC 31267 / DSM 46492 / JCM 5070 / NBRC 14893 / NCIMB 12804 / NRRL 8165 / MA-4680), this protein is Putative membrane protein insertion efficiency factor.